We begin with the raw amino-acid sequence, 156 residues long: Cyclin-dependent protein kinase inhibitor SMR10 (156 aa).

The segment at 52-90 is disordered; sequence QDQDLEPKSQETNNCSRKEGATVKKEEEEEDDYCKTPTR. A compositionally biased stretch (basic and acidic residues) spans 67–77; sequence SRKEGATVKKE.

Its function is as follows. Probable cyclin-dependent protein kinase (CDK) inhibitor that functions as a repressor of mitosis in the endoreduplication cell cycle. The protein is Cyclin-dependent protein kinase inhibitor SMR10 of Arabidopsis thaliana (Mouse-ear cress).